The primary structure comprises 1148 residues: Protein pianissimo A (1148 aa).

A compositionally biased stretch (low complexity) spans 1-34; that stretch reads MTSSDSSVNTTSSSFGNISISSPNHSSSTPPLNN. The tract at residues 1-41 is disordered; it reads MTSSDSSVNTTSSSFGNISISSPNHSSSTPPLNNGNGNNVS. The N-terminal Ras-GEF domain occupies 803-914; sequence KVSALSLNVL…STSGVYLPPH (112 aa).

This sequence belongs to the RICTOR family. Part of a complex, TORC2, consisting of tor, lst8, piaA and ripA. Additional proteins, such as 14-3-3 and heat-shock proteins, may also belong to the TORC2 complex.

Its subcellular location is the cytoplasm. In terms of biological role, regulates cell growth, chemotaxis, signal relay and the actin cytoskeleton. Required for chemoattractant receptor and G protein-mediated activation of the 12 transmembrane domain adenylyl cyclase. Functions as a part of protein complex TORC2. TORC2, is presumed to be indirectly negatively modulated by rapamycin and regulates actin polarization. TORC2, but not TORC1, negatively regulates phagocytosis. This protein and dagA protein CRAC, a cytosolic regulator, are both essential for activation of the enzyme adenylyl cyclase. This protein and CRAC do not function redundantly. Both proteins are integral components of the adenylyl cyclase activation pathway. The chain is Protein pianissimo A (piaA) from Dictyostelium discoideum (Social amoeba).